A 235-amino-acid chain; its full sequence is uncharacterized protein (235 aa).

Transmembrane regions (helical) follow at residues 41 to 61 (IFWH…IYRL), 71 to 91 (LRTF…IEFP), and 129 to 149 (IGII…TPTI).

The protein localises to the membrane. This is an uncharacterized protein from Schizosaccharomyces pombe (strain 972 / ATCC 24843) (Fission yeast).